We begin with the raw amino-acid sequence, 123 residues long: Histone H2B (123 aa).

Positions 1–30 (MPPKTSGKAAKKAGKAQKNITKTDKKKKRK) are disordered. P2 carries the N-methylproline; partial modification. N6-succinyllysine is present on K44. S110 is a glycosylation site (O-linked (GlcNAc) serine). Residues K114 and K118 each carry the N6-succinyllysine modification. A Glycyl lysine isopeptide (Lys-Gly) (interchain with G-Cter in ubiquitin) cross-link involves residue K118.

The protein belongs to the histone H2B family. The nucleosome is a histone octamer containing two molecules each of H2A, H2B, H3 and H4 assembled in one H3-H4 heterotetramer and two H2A-H2B heterodimers. The octamer wraps approximately 147 bp of DNA. Phosphorylated by the catalytic component of the Dbf4-dependent kinase (DDK) complex Cdc7. In terms of processing, monoubiquitination of Lys-118 by Bre1 gives a specific tag for epigenetic transcriptional activation and is also prerequisite for histone H3 'Lys-4' and 'Lys-79' methylation. Deubiquitination of Lys-118 by the SAGA complex is involved in activating transcription of a large subset of genes. Post-translationally, methylation at Pro-2 increases upon heat shock. GlcNAcylation at Ser-110 promotes monoubiquitination of Lys-118. It fluctuates in response to extracellular glucose, and associates with transcribed genes.

Its subcellular location is the nucleus. It is found in the chromosome. Functionally, core component of nucleosome. Nucleosomes wrap and compact DNA into chromatin, limiting DNA accessibility to the cellular machineries which require DNA as a template. Histones thereby play a central role in transcription regulation, DNA repair, DNA replication and chromosomal stability. DNA accessibility is regulated via a complex set of post-translational modifications of histones, also called histone code, and nucleosome remodeling. In Drosophila erecta (Fruit fly), this protein is Histone H2B (His2B).